The following is a 353-amino-acid chain: Photosystem II D2 protein (353 aa).

The residue at position 2 (threonine 2) is an N-acetylthreonine. Phosphothreonine is present on threonine 2. The chain crosses the membrane as a helical span at residues 41 to 61 (CAYFAVGGWFTGTTFVTSWYT). A chlorophyll a-binding site is contributed by histidine 118. Residues 125–141 (GFMLRQFELARSVQLRP) form a helical membrane-spanning segment. Positions 130 and 143 each coordinate pheophytin a. Residues 153–166 (VFVSVFLIYPLGQS) traverse the membrane as a helical segment. Position 198 (histidine 198) interacts with chlorophyll a. Residues 208–228 (AALLCAIHGATVENTLFEDGD) traverse the membrane as a helical segment. A plastoquinone contacts are provided by histidine 215 and phenylalanine 262. Histidine 215 provides a ligand contact to Fe cation. Fe cation is bound at residue histidine 269. The chain crosses the membrane as a helical span at residues 279–295 (GLWMSALGVVGLALNLR).

The protein belongs to the reaction center PufL/M/PsbA/D family. PSII is composed of 1 copy each of membrane proteins PsbA, PsbB, PsbC, PsbD, PsbE, PsbF, PsbH, PsbI, PsbJ, PsbK, PsbL, PsbM, PsbT, PsbX, PsbY, PsbZ, Psb30/Ycf12, at least 3 peripheral proteins of the oxygen-evolving complex and a large number of cofactors. It forms dimeric complexes. It depends on The D1/D2 heterodimer binds P680, chlorophylls that are the primary electron donor of PSII, and subsequent electron acceptors. It shares a non-heme iron and each subunit binds pheophytin, quinone, additional chlorophylls, carotenoids and lipids. There is also a Cl(-1) ion associated with D1 and D2, which is required for oxygen evolution. The PSII complex binds additional chlorophylls, carotenoids and specific lipids. as a cofactor.

The protein resides in the plastid. The protein localises to the chloroplast thylakoid membrane. It carries out the reaction 2 a plastoquinone + 4 hnu + 2 H2O = 2 a plastoquinol + O2. Photosystem II (PSII) is a light-driven water:plastoquinone oxidoreductase that uses light energy to abstract electrons from H(2)O, generating O(2) and a proton gradient subsequently used for ATP formation. It consists of a core antenna complex that captures photons, and an electron transfer chain that converts photonic excitation into a charge separation. The D1/D2 (PsbA/PsbD) reaction center heterodimer binds P680, the primary electron donor of PSII as well as several subsequent electron acceptors. D2 is needed for assembly of a stable PSII complex. This is Photosystem II D2 protein from Solanum bulbocastanum (Wild potato).